A 342-amino-acid chain; its full sequence is 4-amino-5-hydroxymethyl-2-methylpyrimidine phosphate synthase (342 aa).

At K62 the chain carries N6-(pyridoxal phosphate)lysine. H66 is an active-site residue. 115-118 contributes to the pyridoxal 5'-phosphate binding site; sequence GEFG. Positions 195 to 199 match the CCCFC; essential for catalytic activity, may be the site of iron coordination motif; the sequence is CCCFC.

It belongs to the NMT1/THI5 family. As to quaternary structure, homodimer. Fe cation is required as a cofactor.

The enzyme catalyses N(6)-(pyridoxal phosphate)-L-lysyl-[4-amino-5-hydroxymethyl-2-methylpyrimidine phosphate synthase] + L-histidyl-[4-amino-5-hydroxymethyl-2-methylpyrimidine phosphate synthase] + 2 Fe(3+) + 4 H2O = L-lysyl-[4-amino-5-hydroxymethyl-2-methylpyrimidine phosphate synthase] + (2S)-2-amino-5-hydroxy-4-oxopentanoyl-[4-amino-5-hydroxymethyl-2-methylpyrimidine phosphate synthase] + 4-amino-2-methyl-5-(phosphooxymethyl)pyrimidine + 3-oxopropanoate + 2 Fe(2+) + 2 H(+). It participates in cofactor biosynthesis; thiamine diphosphate biosynthesis. Its function is as follows. Responsible for the formation of the pyrimidine heterocycle in the thiamine biosynthesis pathway. Catalyzes the formation of hydroxymethylpyrimidine phosphate (HMP-P) from histidine and pyridoxal phosphate (PLP). The protein uses PLP and the active site histidine to form HMP-P, generating an inactive enzyme. The enzyme can only undergo a single turnover, which suggests it is a suicide enzyme. This chain is 4-amino-5-hydroxymethyl-2-methylpyrimidine phosphate synthase, found in Aspergillus parasiticus.